The following is a 905-amino-acid chain: MQGNERIQDKNEKEKAYAPYLDGASVSTDNGPILSVFALQEIMQKIRQNQSDMAAHAPDVDGAIPEVMTIISGIKGLLEEKDYKVINAPPNSFRTIPMQSMEYVLQVNTFYERMSEIGGPVDETDPIGFYALILEKLKFLKSEGAFILQGIATKDYRGAEIADPEIIGVSFQNALSHLAAIDRQIIQDTLNGMIIENGLVADRNVDVFRAAMSDPIYRIRNVLQGYIEGIQYGELRESVNWLMRLGLRKRIEFANDFLTDFRRADTIWIISQRLPINANVIWNVPRCHIANLNTNVALCLPTGEYLMPNPRINSITITQRITQTNPFSIISGLTPTAVQMNDVRKIYLALMFPNQIILDIKPDSSHAVDPVLRMVAGVLGHVMFTYGPIMTNITPTMAELLDAALSDYLLYMYNNRIPINYGPTGQPLDFRIGARNQYDCNAFRADPQTGRGYNGWGVVDVQRVQPSPYDHVQRVIRYCDIDSREIIDPRTYGMNMTYPIFREMLRMLVAAGKDQEAAYLRQMLPFHMIRFARINQIINEDLLSAFSLPDQNFDVVLHNLIQGNFGETDPVILEVSWASIWFAFVRRFEPIARSDLLEAAPLIEARYAAELSTMQMDVQQLRMMRARVPDTVINATPSQCWKAVLKNAPEPIKNLMNLSHSFSFVNVRDIVRWSQQRDIQESLAYVLNREAWAIANDFEDLMLVDHVYIQRTMLPEPRLDDINEFRRQGFFHTNMIDGAPPIGDVTHYTYAIANLQANMGQFRAAIRRTLDDNGWIQFGGMLRNIKIKFFDSRPPDEILTAMPYVYTEEERDGVRMVAFKYATTATAYFLLYNVEYSNTPDTLITVNPTFTMTKIHMRKKIVRRVRAPDVLSQVNKRLVAYKGKMRLMDVTKCLKTGVQLARPTI.

Belongs to the orbivirus VP3 family.

It localises to the virion. The VP3 protein is one of the five proteins (with VP1, VP4, VP6 and VP7) which form the inner capsid of the virus. In African horse sickness virus 6 (AHSV-6), this protein is Core protein VP3 (Segment-3).